Here is a 140-residue protein sequence, read N- to C-terminus: L-fucose mutarotase (140 aa).

Histidine 22 (proton donor) is an active-site residue. Residues aspartate 30, arginine 107, and 129-131 each bind substrate; that span reads YGN.

The protein belongs to the RbsD / FucU family. FucU mutarotase subfamily. Homodecamer.

The protein resides in the cytoplasm. It carries out the reaction alpha-L-fucose = beta-L-fucose. The protein operates within carbohydrate metabolism; L-fucose metabolism. Functionally, involved in the anomeric conversion of L-fucose. This Klebsiella pneumoniae subsp. pneumoniae (strain ATCC 700721 / MGH 78578) protein is L-fucose mutarotase.